The chain runs to 566 residues: Sorting nexin lst-4 (566 aa).

The SH3 domain maps to 1–61 (MAQVKAEYDF…PESYVTPYQA (61 aa)). The segment at 59–179 (YQASRPPPVL…DRGSNKVNKN (121 aa)) is disordered. Positions 63–77 (RPPPVLPPPLPPTSS) are enriched in pro residues. Residues 127 to 140 (DDFDDEWTDEDDEQ) show a composition bias toward acidic residues. Residues 143–154 (TRPNVQSSIGSN) are compositionally biased toward polar residues. Residues 155–173 (SRRDLSRSHSEHGGPDRGS) show a composition bias toward basic and acidic residues. The PX domain maps to 227–339 (YTCIVDKPKK…HFISCTDEKD (113 aa)). One can recognise a BAR domain in the interval 362-566 (TVPHQPLDPN…KLTSLAARYD (205 aa)).

It belongs to the sorting nexin family. Homodimer. Isoform d interacts (via SH3 domain) with dyn-1. As to expression, expressed in vulval precursor cells (VPCs) and apoptotic germ cells. Colocalizes with actin, dyn-1 and rab-5 in early phagosomes.

It is found in the cytoplasm. The protein localises to the cytoplasmic vesicle. It localises to the phagosome membrane. Its function is as follows. Involved in the signaling of vulval development by acting as a negative regulator of epidermal growth factor receptor (EGFR) signaling. Aids in phagosomal membrane tubule formation which is required for phagosomal fusion with endosomes and lysosomes. Also recruits rab-7 to phagosomes by an interaction with dyn-1. These are events leading to phagosome maturation which is a step in apoptotic cell corpse clearance. Binds phosphatidylinositol-3,4,5-trisphosphate. This is Sorting nexin lst-4 from Caenorhabditis elegans.